A 380-amino-acid polypeptide reads, in one-letter code: UDP-N-acetylglucosamine--N-acetylmuramyl-(pentapeptide) pyrophosphoryl-undecaprenol N-acetylglucosamine transferase (380 aa).

Residues 23–25 (TGG), asparagine 137, arginine 178, serine 210, isoleucine 266, and glutamine 311 each bind UDP-N-acetyl-alpha-D-glucosamine.

This sequence belongs to the glycosyltransferase 28 family. MurG subfamily.

The protein localises to the cell inner membrane. It catalyses the reaction di-trans,octa-cis-undecaprenyl diphospho-N-acetyl-alpha-D-muramoyl-L-alanyl-D-glutamyl-meso-2,6-diaminopimeloyl-D-alanyl-D-alanine + UDP-N-acetyl-alpha-D-glucosamine = di-trans,octa-cis-undecaprenyl diphospho-[N-acetyl-alpha-D-glucosaminyl-(1-&gt;4)]-N-acetyl-alpha-D-muramoyl-L-alanyl-D-glutamyl-meso-2,6-diaminopimeloyl-D-alanyl-D-alanine + UDP + H(+). Its pathway is cell wall biogenesis; peptidoglycan biosynthesis. Its function is as follows. Cell wall formation. Catalyzes the transfer of a GlcNAc subunit on undecaprenyl-pyrophosphoryl-MurNAc-pentapeptide (lipid intermediate I) to form undecaprenyl-pyrophosphoryl-MurNAc-(pentapeptide)GlcNAc (lipid intermediate II). In Bacteroides fragilis (strain ATCC 25285 / DSM 2151 / CCUG 4856 / JCM 11019 / LMG 10263 / NCTC 9343 / Onslow / VPI 2553 / EN-2), this protein is UDP-N-acetylglucosamine--N-acetylmuramyl-(pentapeptide) pyrophosphoryl-undecaprenol N-acetylglucosamine transferase.